The chain runs to 163 residues: Lipoprotein signal peptidase (163 aa).

4 helical membrane passes run 9–29, 42–62, 67–87, and 93–113; these read AWPWLWFSVLVILLDQLSKYL, ILPFLNFTLNYNTGAAFSFLG, WQIIFFAAISFVVSIFLILWL, and SEIMMLLGLSLIIGGALGNFI. Catalysis depends on residues D123 and D141. The chain crosses the membrane as a helical span at residues 137 to 157; the sequence is FNVADSAICVGVFLLIVHMLL.

The protein belongs to the peptidase A8 family.

It localises to the cell inner membrane. It catalyses the reaction Release of signal peptides from bacterial membrane prolipoproteins. Hydrolyzes -Xaa-Yaa-Zaa-|-(S,diacylglyceryl)Cys-, in which Xaa is hydrophobic (preferably Leu), and Yaa (Ala or Ser) and Zaa (Gly or Ala) have small, neutral side chains.. It functions in the pathway protein modification; lipoprotein biosynthesis (signal peptide cleavage). This protein specifically catalyzes the removal of signal peptides from prolipoproteins. The chain is Lipoprotein signal peptidase from Coxiella burnetii (strain RSA 493 / Nine Mile phase I).